The following is a 472-amino-acid chain: Uronate isomerase (472 aa).

This sequence belongs to the metallo-dependent hydrolases superfamily. Uronate isomerase family.

The enzyme catalyses D-glucuronate = D-fructuronate. It carries out the reaction aldehydo-D-galacturonate = keto-D-tagaturonate. The protein operates within carbohydrate metabolism; pentose and glucuronate interconversion. The polypeptide is Uronate isomerase (Xanthomonas oryzae pv. oryzae (strain MAFF 311018)).